The sequence spans 267 residues: Nanos homolog 1 (267 aa).

The segment at 40 to 56 (FSSWNDYLGLATLITRA) is essential for its translational repressor activity. The interval 57–94 (SDRGSPHEGPGPTAAGPTMGPPEDDEDDDGEEPEAGGR) is disordered. Positions 78 to 90 (PEDDEDDDGEEPE) are enriched in acidic residues. Residues 188 to 242 (VCVFCRNNKEAVALYTTHILKGPDGRVLCPVLRRYTCPLCGASGDNAHTIKYCPL) form a Nanos-type zinc finger. 8 residues coordinate Zn(2+): Cys-189, Cys-192, His-205, Cys-216, Cys-224, Cys-227, His-235, and Cys-240. 2 short sequence motifs (C2HC) span residues 189–216 (CVFC…RVLC) and 224–240 (CPLC…IKYC). The tract at residues 243-267 (SKVPPPTVRPPPRSNRDSLPSKKLR) is disordered. The span at 244 to 255 (KVPPPTVRPPPR) shows a compositional bias: pro residues. Positions 256 to 267 (SNRDSLPSKKLR) are enriched in basic and acidic residues.

The protein belongs to the nanos family. In terms of assembly, interacts with PUM2, SNAPIN and CTNNB1. Interacts (via N-terminal region) with CTNND1. Interacts with DDX20 (via N-terminal region). As to expression, expressed in the oocyte. Transiently expressed in eight-cell embryos. At 12.5 dpc, it is re-expressed in the central nervous system and the expression continues in the adult brain, in which the hippocampal formation is the predominant region. Expressed in the seminiferous tubules of mature testis, but not in the primordial germ cells.

The protein resides in the cytoplasm. It is found in the perinuclear region. In terms of biological role, may act as a translational repressor which regulates translation of specific mRNAs by forming a complex with PUM2 that associates with the 3'-UTR of mRNA targets. Capable of interfering with the proadhesive and anti-invasive functions of E-cadherin. Up-regulates the production of MMP14 to promote tumor cell invasion. Not essential for normal development. This Mus musculus (Mouse) protein is Nanos homolog 1 (Nanos1).